The primary structure comprises 706 residues: Acyl-coenzyme A oxidase (706 aa).

The tract at residues 682 to 706 is disordered; the sequence is MLNRPSKEERERFEKSTETAKILSK. Basic and acidic residues predominate over residues 686–699; sequence PSKEERERFEKSTE.

It belongs to the acyl-CoA oxidase family. It depends on FAD as a cofactor.

Its subcellular location is the peroxisome. It carries out the reaction a 2,3-saturated acyl-CoA + O2 = a (2E)-enoyl-CoA + H2O2. The protein operates within lipid metabolism; peroxisomal fatty acid beta-oxidation. This Debaryomyces hansenii (strain ATCC 36239 / CBS 767 / BCRC 21394 / JCM 1990 / NBRC 0083 / IGC 2968) (Yeast) protein is Acyl-coenzyme A oxidase (POX1).